The chain runs to 78 residues: RNA-binding protein Hfq (78 aa).

Residues 10–70 form the Sm domain; the sequence is DLFLNSVRKQ…ISTIMPSQPV (61 aa).

This sequence belongs to the Hfq family. Homohexamer.

RNA chaperone that binds small regulatory RNA (sRNAs) and mRNAs to facilitate mRNA translational regulation in response to envelope stress, environmental stress and changes in metabolite concentrations. Also binds with high specificity to tRNAs. The polypeptide is RNA-binding protein Hfq (Brucella abortus (strain S19)).